We begin with the raw amino-acid sequence, 451 residues long: Probable tyrosyl-DNA phosphodiesterase (451 aa).

The segment at 1 to 34 (MKRTIQETPGPSSTTVPPPKKLNSQRNGSNLEPG) is disordered. Over residues 22-32 (LNSQRNGSNLE) the composition is skewed to polar residues. The Nucleophile role is filled by H131. Position 133 (K133) interacts with substrate. Residues 266-269 (SIGS) form an interaction with DNA region. The Proton donor/acceptor role is filled by H356. Residue K358 participates in substrate binding.

It belongs to the tyrosyl-DNA phosphodiesterase family.

It localises to the nucleus. DNA repair enzyme that can remove a variety of covalent adducts from DNA through hydrolysis of a 3'-phosphodiester bond, giving rise to DNA with a free 3' phosphate. Catalyzes the hydrolysis of dead-end complexes between DNA and the topoisomerase I active site tyrosine residue. Hydrolyzes 3'-phosphoglycolates on protruding 3' ends on DNA double-strand breaks due to DNA damage by radiation and free radicals. Acts on blunt-ended double-strand DNA breaks and on single-stranded DNA. May have low 3'exonuclease activity and may be able to remove a single nucleoside from the 3'end of DNA and RNA molecules with 3'hydroxyl groups. Has no exonuclease activity towards DNA or RNA with a 3'phosphate. The polypeptide is Probable tyrosyl-DNA phosphodiesterase (Caenorhabditis elegans).